The primary structure comprises 487 residues: Betaine aldehyde dehydrogenase (487 aa).

Residues Ser-26 and Asp-93 each contribute to the K(+) site. An NAD(+)-binding site is contributed by 150–152 (GAW). The active-site Charge relay system is the Lys-162. Residues 176–179 (KPSE) and 229–232 (SVPT) contribute to the NAD(+) site. K(+) is bound at residue Leu-244. Glu-250 serves as the catalytic Proton acceptor. Gly-252, Cys-284, and Glu-384 together coordinate NAD(+). The active-site Nucleophile is the Cys-284. Residue Cys-284 is modified to Cysteine sulfenic acid (-SOH). K(+) contacts are provided by Lys-454 and Gly-457. Glu-461 serves as the catalytic Charge relay system.

This sequence belongs to the aldehyde dehydrogenase family. As to quaternary structure, dimer of dimers. It depends on K(+) as a cofactor.

The enzyme catalyses betaine aldehyde + NAD(+) + H2O = glycine betaine + NADH + 2 H(+). Its pathway is amine and polyamine biosynthesis; betaine biosynthesis via choline pathway; betaine from betaine aldehyde: step 1/1. Its function is as follows. Involved in the biosynthesis of the osmoprotectant glycine betaine. Catalyzes the irreversible oxidation of betaine aldehyde to the corresponding acid. This Rhizobium etli (strain CIAT 652) protein is Betaine aldehyde dehydrogenase.